We begin with the raw amino-acid sequence, 383 residues long: Seipin (383 aa).

The Cytoplasmic segment spans residues 1–27 (MVNDPPVPALLWAQEVGHVLAGRARRL). Residues 28–48 (MLQFGVLFCTILLLLWVSVFL) traverse the membrane as a helical segment. The Lumenal portion of the chain corresponds to 49–242 (YGSFYYSYMP…TCAFVGVASN (194 aa)). N-linked (GlcNAc...) asparagine glycans are attached at residues asparagine 88 and asparagine 242. The chain crosses the membrane as a helical span at residues 243-263 (FTFLSVIVLFSYMQWVWGAVW). At 264-383 (PRHRFSLQVN…LRQRPTCSSS (120 aa)) the chain is on the cytoplasmic side. The tract at residues 279–383 (NSHHGAPRRI…LRQRPTCSSS (105 aa)) is disordered. Position 289 is a phosphoserine (serine 289). Over residues 292-302 (QPGQESTQQSD) the composition is skewed to polar residues. Over residues 322–332 (EEEKPEKRPLN) the composition is skewed to basic and acidic residues. Phosphoserine is present on residues serine 342 and serine 345. The span at 353–371 (TEANPPTSASASALAPETL) shows a compositional bias: low complexity.

Belongs to the seipin family. Undecamer (an oligomer having eleven subunits). Oligomerization is important for its function in lipid droplet formation. Interacts with LDAF1 to form an oligomeric complex. Interacts with RAB18. Interacts with ZFYVE1 in a RAB18-dependent manner. Expressed in the paraventricular nucleus of the hypothalamus (PVN) and brainstem dorsal vagal complex (DVC) in oxytocin and catecholaminergic neurons (at protein level). Highest expression detected in subcutaneous and epididymal white adipose tissue, brown adipose tissue and testis. Also expressed in brain, skeletal muscle and adrenal gland, with lower levels detected in liver, heart, kidney, spleen, lung and small intestine. In brain, detected in piriform cortex, olfactory tubercle, islands of Calleja, lateral septal nucleus, medial septal nucleus, nucleus of the vertical limb of the diagonal band, nucleus of the horizontal limb of the diagonal band, preoptic area, paraventricular thalamic nucleus, lateral globus pallidus, supraoptic nucleus, suprachiasmatic nucleus, subfornical organ, paraventricular nucleus of the hypothalamus, zona incerta, dorsomedial nucleus of the hypothalamus, ventromedial nucleus of the hypothalamus, arcuate nucleus of the hypothalamus, basomedial amygdaloid nucleus, medial amygdaloid nucleus, medial habenular, pyramidal cell layer of the hippocampus, granular layer of the dentate gyrus, posterior hypothalamus, supramammilliary nucleus, premammillary nucleus, nucleus of Darkschewitsch, Edinger-Westphal nucleus, ventral tegmental area, dorsal raphe nucleus, periaqueductal gray, median raphe nucleus, lateral parabrachial nucleus, dorsal tegmental nucleus, laterodorsal tegmental nucleus, locus coeruleus, Barrington's nucleus, medial vestibular nucleus, ambiguous nucleus, dorsal vagal complex and hypoglossal nucleus.

The protein localises to the endoplasmic reticulum membrane. It is found in the lipid droplet. Its function is as follows. Plays a crucial role in the formation of lipid droplets (LDs) which are storage organelles at the center of lipid and energy homeostasis. In association with LDAF1, defines the sites of LD formation in the ER. Also required for growth and maturation of small nascent LDs into larger mature LDs. Mediates the formation and/or stabilization of endoplasmic reticulum-lipid droplets (ER-LD) contacts, facilitating protein and lipid delivery from the ER into growing LDs. Regulates the maturation of ZFYVE1-positive nascent LDs and the function of the RAB18-ZFYVE1 complex in mediating the formation of ER-LD contacts. Binds anionic phospholipids including phosphatidic acid. Plays an important role in the differentiation and development of adipocytes. In Mus musculus (Mouse), this protein is Seipin.